We begin with the raw amino-acid sequence, 1351 residues long: ABC transporter C family member 6 (1351 aa).

The ABC transmembrane type-1 1 domain occupies 112–397 (NKYALVSNLF…LPYDIFKAIG (286 aa)). 3 helical membrane-spanning segments follow: residues 120 to 140 (LFII…INYI), 149 to 169 (SILK…GQSI), and 248 to 268 (LLCY…VIAL). The region spanning 474–700 (NQDESINKKE…GIDFKSILKT (227 aa)) is the ABC transporter 1 domain. 510-517 (GVVGSGKT) contributes to the ATP binding site. The stretch at 701 to 734 (KEIKKNVENETDSEELIKNEIEIENEIIDVNNAI) forms a coiled coil. Helical transmembrane passes span 771–791 (GSSG…QAIF), 815–835 (IGYY…RILL), 904–924 (LISI…LSIA), 977–999 (MFDN…RWVS), 1002–1022 (LEVM…LFIS), and 1025–1045 (GLAA…SWGI). The ABC transmembrane type-1 2 domain maps to 777 to 1060 (LFITISLFFV…LEVKMNSFQR (284 aa)). In terms of domain architecture, ABC transporter 2 spans 1101–1336 (IEFKNVEIKY…PNSKFNKLIK (236 aa)). Residue 1135–1142 (GRTGAGKT) participates in ATP binding.

This sequence belongs to the ABC transporter superfamily. ABCC family. Conjugate transporter (TC 3.A.1.208) subfamily.

It localises to the membrane. The polypeptide is ABC transporter C family member 6 (abcC6) (Dictyostelium discoideum (Social amoeba)).